The sequence spans 290 residues: Short neuropeptide F (290 aa).

Residues 1-32 form the signal peptide; the sequence is MFRFNPQLSHGCALALICCLLNLLMMHQPTNA. Positions 33 to 87 are excised as a propeptide; that stretch reads ELSPVVQGEFFLPILPDDHPPNTDTSFGGPISNLYDNLLQREYAGPVVFPNHQVE. Phenylalanine amide occurs at positions 100 and 134. A propeptide spanning residues 138-290 is cleaved from the precursor; sequence DPTLPQMRRT…IETSSIAPKN (153 aa). A disordered region spans residues 238–290; sequence VAGYANDGDDTEAQLDEDTSEFQREARKPMRLRWGRSTGKAPQIETSSIAPKN. The segment covering 244–257 has biased composition (acidic residues); that stretch reads DGDDTEAQLDEDTS. Residues 281 to 290 show a composition bias toward polar residues; sequence IETSSIAPKN.

This sequence belongs to the NPY family.

The protein resides in the secreted. In terms of biological role, plays a role in controlling food intake and regulating body size. The chain is Short neuropeptide F from Drosophila pseudoobscura pseudoobscura (Fruit fly).